A 420-amino-acid chain; its full sequence is Ammonia monooxygenase beta subunit (420 aa).

A signal peptide spans 1–25; that stretch reads MGIKNLYKRGVMGLYGVAYAVAALA. The Cu cation site is built by His38, His142, and His144. 2 helical membrane-spanning segments follow: residues 193–213 and 240–260; these read GIFW…VFTA and ITWV…RYTE.

As to quaternary structure, the soluble ammonia monooxygenase is a nonamer composed of three alpha subunits (AmoA), three beta subunits (AmoB) and three gamma subunits (Cytochrome c1 PetC). The cofactor is Cu(2+).

The protein localises to the cell membrane. It is found in the cytoplasm. It carries out the reaction AH2 + NH4(+) + O2 = hydroxylamine + A + H2O + H(+). With respect to regulation, in vitro, inhibited by acetylene. Functionally, part of the ammonia monooxygenase complex, which catalyzes the oxidation of ammonia to hydroxylamine, the first reaction in the process of ammonia oxidation to nitrite. In Nitrosomonas europaea (strain ATCC 19718 / CIP 103999 / KCTC 2705 / NBRC 14298), this protein is Ammonia monooxygenase beta subunit.